Reading from the N-terminus, the 373-residue chain is Acyl-CoA dehydrogenase FadE27 (373 aa).

FAD contacts are provided by Arg251, His327, and Gly331.

The protein belongs to the acyl-CoA dehydrogenase family. Heterotetramer (dimer of heterodimers) composed of FadE26 and FadE27. The cofactor is FAD.

The catalysed reaction is (25S)-3-oxocholest-4-en-26-oyl-CoA + A = 3-oxo-cholest-4,24-dien-26-oyl-CoA + AH2. Its pathway is steroid metabolism; cholesterol degradation. With respect to regulation, uncompetitively inhibited by high concentration of 3-OCS-CoA. Involved in the first cycle of side chain dehydrogenation in the beta-oxidation of cholesterol catabolism. It contributes partly to the virulence by increasing the efficiency of beta-oxidation. Catalyzes the dehydrogenation of acyl-CoA ester side chains of (25S)-3-oxo-cholest-4-en-26-oyl-CoA (3-OCS-CoA) to yield (24E)-3-oxo-cholest-4,24-dien-26-oyl-CoA. Also able to dehydrogenate steroyl-CoA such as 3-oxo-chol-4-en-24-oyl-CoA (3-OCO-CoA) as well as 3-oxo-4-pregnene-20-carboxyl-CoA (3-OPC-CoA). It dehydrogenates only (25S)-OCS-CoA diastereomer. The chain is Acyl-CoA dehydrogenase FadE27 (fadE27) from Mycobacterium tuberculosis (strain ATCC 25618 / H37Rv).